Reading from the N-terminus, the 174-residue chain is Male-enhanced antigen 1 (174 aa).

Disordered regions lie at residues Met-1 to Ala-83 and His-95 to Asp-123. Acidic residues-rich tracts occupy residues Ser-38–Glu-48, Pro-65–Ala-82, and Leu-101–Gly-110. Ser-103 bears the Phosphoserine mark.

As to expression, highly expressed in testis. Transcripts can be found in primary and secondary spermatocytes, and spermatids, but the protein itself is only detected in spermatids. No expression in Leydig cells, spermatogonia, or sperm. Very weak expression in the heart, kidney, spleen, thymus and ovary.

In terms of biological role, may play an important role in spermatogenesis and/or testis development. This Mus musculus (Mouse) protein is Male-enhanced antigen 1 (Mea1).